The sequence spans 167 residues: ATP synthase subunit delta, mitochondrial (167 aa).

Residues 1 to 28 (MFRLSNYMLRKSQFPQGLVRAPFGIRGY) constitute a mitochondrion transit peptide.

This sequence belongs to the ATPase epsilon chain family. As to quaternary structure, F-type ATPases have 2 components, CF(1) - the catalytic core - and CF(0) - the membrane proton channel. CF(1) has five subunits: alpha(3), beta(3), gamma(1), delta(1), epsilon(1). CF(0) has three main subunits: a, b and c.

The protein localises to the mitochondrion. Its subcellular location is the mitochondrion inner membrane. Mitochondrial membrane ATP synthase (F(1)F(0) ATP synthase or Complex V) produces ATP from ADP in the presence of a proton gradient across the membrane which is generated by electron transport complexes of the respiratory chain. F-type ATPases consist of two structural domains, F(1) - containing the extramembraneous catalytic core, and F(0) - containing the membrane proton channel, linked together by a central stalk and a peripheral stalk. During catalysis, ATP turnover in the catalytic domain of F(1) is coupled via a rotary mechanism of the central stalk subunits to proton translocation. Part of the complex F(1) domain and of the central stalk which is part of the complex rotary element. Rotation of the central stalk against the surrounding alpha(3)beta(3) subunits leads to hydrolysis of ATP in three separate catalytic sites on the beta subunits. The protein is ATP synthase subunit delta, mitochondrial (atp16) of Schizosaccharomyces pombe (strain 972 / ATCC 24843) (Fission yeast).